An 86-amino-acid polypeptide reads, in one-letter code: Small ribosomal subunit protein bS18 (86 aa).

The protein belongs to the bacterial ribosomal protein bS18 family. In terms of assembly, part of the 30S ribosomal subunit. Forms a tight heterodimer with protein bS6.

Its function is as follows. Binds as a heterodimer with protein bS6 to the central domain of the 16S rRNA, where it helps stabilize the platform of the 30S subunit. The protein is Small ribosomal subunit protein bS18 of Campylobacter curvus (strain 525.92).